Reading from the N-terminus, the 529-residue chain is Peptide chain release factor 3 (529 aa).

The tr-type G domain occupies 11–280; that stretch reads AKRRTFAIIS…GLVEWAPAPM (270 aa). Residues 20 to 27, 88 to 92, and 142 to 145 contribute to the GTP site; these read SHPDAGKT, DTPGH, and NKLD.

Belongs to the TRAFAC class translation factor GTPase superfamily. Classic translation factor GTPase family. PrfC subfamily.

The protein resides in the cytoplasm. In terms of biological role, increases the formation of ribosomal termination complexes and stimulates activities of RF-1 and RF-2. It binds guanine nucleotides and has strong preference for UGA stop codons. It may interact directly with the ribosome. The stimulation of RF-1 and RF-2 is significantly reduced by GTP and GDP, but not by GMP. This is Peptide chain release factor 3 from Yersinia enterocolitica serotype O:8 / biotype 1B (strain NCTC 13174 / 8081).